The primary structure comprises 220 residues: Inner membrane-spanning protein YciB (220 aa).

Transmembrane regions (helical) follow at residues 20–40 (EVPPLLKLALELGPLLVFFFA), 57–77 (IGAPIFLATALFMAATVIALA), 86–106 (LPIMPLVSGIVVLVFGALTLW), 123–143 (LFGGILLGGLFFGKSLLGYVF), 156–176 (KLTLRWALFFIFLAIVNEIVW), and 187–207 (FKVWGIMPITIVFTLLQMPLI).

It belongs to the YciB family.

Its subcellular location is the cell inner membrane. Functionally, plays a role in cell envelope biogenesis, maintenance of cell envelope integrity and membrane homeostasis. The protein is Inner membrane-spanning protein YciB of Brucella melitensis biotype 2 (strain ATCC 23457).